The chain runs to 96 residues: Putative septation protein SpoVG (96 aa).

It belongs to the SpoVG family.

In terms of biological role, could be involved in septation. The protein is Putative septation protein SpoVG of Oceanobacillus iheyensis (strain DSM 14371 / CIP 107618 / JCM 11309 / KCTC 3954 / HTE831).